Consider the following 356-residue polypeptide: DNA integrity scanning protein DisA (356 aa).

One can recognise a DAC domain in the interval 7–147 (NKNMLYALKM…EKYVVEDISK (141 aa)). Residues Gly-74, Leu-92, and 105–109 (TRHRT) contribute to the ATP site.

It belongs to the DisA family. Homooctamer. The cofactor is Mg(2+).

It catalyses the reaction 2 ATP = 3',3'-c-di-AMP + 2 diphosphate. Functionally, participates in a DNA-damage check-point that is active prior to asymmetric division when DNA is damaged. DisA forms globular foci that rapidly scan along the chromosomes during sporulation, searching for lesions. When a lesion is present, DisA pauses at the lesion site. This triggers a cellular response that culminates in a temporary block in sporulation initiation. Its function is as follows. Also has diadenylate cyclase activity, catalyzing the condensation of 2 ATP molecules into cyclic di-AMP (c-di-AMP). c-di-AMP acts as a signaling molecule that couples DNA integrity with progression of sporulation. The rise in c-di-AMP level generated by DisA while scanning the chromosome, operates as a positive signal that advances sporulation; upon encountering a lesion, the DisA focus arrests at the damaged site and halts c-di-AMP synthesis. The chain is DNA integrity scanning protein DisA from Clostridioides difficile (strain 630) (Peptoclostridium difficile).